The primary structure comprises 330 residues: 4-hydroxythreonine-4-phosphate dehydrogenase (330 aa).

Substrate contacts are provided by histidine 136 and threonine 137. Positions 166, 211, and 266 each coordinate a divalent metal cation. Substrate is bound by residues lysine 274, asparagine 283, and arginine 292.

This sequence belongs to the PdxA family. As to quaternary structure, homodimer. The cofactor is Zn(2+). Mg(2+) serves as cofactor. Requires Co(2+) as cofactor.

It localises to the cytoplasm. The catalysed reaction is 4-(phosphooxy)-L-threonine + NAD(+) = 3-amino-2-oxopropyl phosphate + CO2 + NADH. Its pathway is cofactor biosynthesis; pyridoxine 5'-phosphate biosynthesis; pyridoxine 5'-phosphate from D-erythrose 4-phosphate: step 4/5. Its function is as follows. Catalyzes the NAD(P)-dependent oxidation of 4-(phosphooxy)-L-threonine (HTP) into 2-amino-3-oxo-4-(phosphooxy)butyric acid which spontaneously decarboxylates to form 3-amino-2-oxopropyl phosphate (AHAP). The chain is 4-hydroxythreonine-4-phosphate dehydrogenase from Sodalis glossinidius (strain morsitans).